The primary structure comprises 356 residues: UDP-N-acetylglucosamine--N-acetylmuramyl-(pentapeptide) pyrophosphoryl-undecaprenol N-acetylglucosamine transferase (356 aa).

Residues Thr15–Gly17, Asn127, Arg163, Ser191, Ile244, Ala263–Glu268, and Gln288 each bind UDP-N-acetyl-alpha-D-glucosamine.

The protein belongs to the glycosyltransferase 28 family. MurG subfamily.

It is found in the cell inner membrane. It carries out the reaction di-trans,octa-cis-undecaprenyl diphospho-N-acetyl-alpha-D-muramoyl-L-alanyl-D-glutamyl-meso-2,6-diaminopimeloyl-D-alanyl-D-alanine + UDP-N-acetyl-alpha-D-glucosamine = di-trans,octa-cis-undecaprenyl diphospho-[N-acetyl-alpha-D-glucosaminyl-(1-&gt;4)]-N-acetyl-alpha-D-muramoyl-L-alanyl-D-glutamyl-meso-2,6-diaminopimeloyl-D-alanyl-D-alanine + UDP + H(+). The protein operates within cell wall biogenesis; peptidoglycan biosynthesis. Its function is as follows. Cell wall formation. Catalyzes the transfer of a GlcNAc subunit on undecaprenyl-pyrophosphoryl-MurNAc-pentapeptide (lipid intermediate I) to form undecaprenyl-pyrophosphoryl-MurNAc-(pentapeptide)GlcNAc (lipid intermediate II). The chain is UDP-N-acetylglucosamine--N-acetylmuramyl-(pentapeptide) pyrophosphoryl-undecaprenol N-acetylglucosamine transferase from Klebsiella pneumoniae subsp. pneumoniae (strain ATCC 700721 / MGH 78578).